We begin with the raw amino-acid sequence, 464 residues long: Bifunctional protein GlmU (464 aa).

Residues 1-231 (MDVVIMAAGK…ATQVAGVNSP (231 aa)) are pyrophosphorylase. UDP-N-acetyl-alpha-D-glucosamine-binding positions include K20, Q78, 83-84 (GT), 105-107 (SGD), G142, E156, and N229. D107 provides a ligand contact to Mg(2+). N229 is a Mg(2+) binding site. The interval 232–252 (VQLAALERAFQSKVALQLMEQ) is linker. Residues 253 to 464 (GVRLADPARL…SIANWKRPSK (212 aa)) are N-acetyltransferase. UDP-N-acetyl-alpha-D-glucosamine contacts are provided by R343 and K361. H373 functions as the Proton acceptor in the catalytic mechanism. The UDP-N-acetyl-alpha-D-glucosamine site is built by Y376 and N387. Acetyl-CoA contacts are provided by residues A390, 396 to 397 (NY), S415, G433, and R450.

The protein in the N-terminal section; belongs to the N-acetylglucosamine-1-phosphate uridyltransferase family. In the C-terminal section; belongs to the transferase hexapeptide repeat family. In terms of assembly, homotrimer. Mg(2+) is required as a cofactor.

The protein resides in the cytoplasm. It carries out the reaction alpha-D-glucosamine 1-phosphate + acetyl-CoA = N-acetyl-alpha-D-glucosamine 1-phosphate + CoA + H(+). It catalyses the reaction N-acetyl-alpha-D-glucosamine 1-phosphate + UTP + H(+) = UDP-N-acetyl-alpha-D-glucosamine + diphosphate. Its pathway is nucleotide-sugar biosynthesis; UDP-N-acetyl-alpha-D-glucosamine biosynthesis; N-acetyl-alpha-D-glucosamine 1-phosphate from alpha-D-glucosamine 6-phosphate (route II): step 2/2. The protein operates within nucleotide-sugar biosynthesis; UDP-N-acetyl-alpha-D-glucosamine biosynthesis; UDP-N-acetyl-alpha-D-glucosamine from N-acetyl-alpha-D-glucosamine 1-phosphate: step 1/1. It participates in bacterial outer membrane biogenesis; LPS lipid A biosynthesis. Its function is as follows. Catalyzes the last two sequential reactions in the de novo biosynthetic pathway for UDP-N-acetylglucosamine (UDP-GlcNAc). The C-terminal domain catalyzes the transfer of acetyl group from acetyl coenzyme A to glucosamine-1-phosphate (GlcN-1-P) to produce N-acetylglucosamine-1-phosphate (GlcNAc-1-P), which is converted into UDP-GlcNAc by the transfer of uridine 5-monophosphate (from uridine 5-triphosphate), a reaction catalyzed by the N-terminal domain. The protein is Bifunctional protein GlmU of Albidiferax ferrireducens (strain ATCC BAA-621 / DSM 15236 / T118) (Rhodoferax ferrireducens).